Reading from the N-terminus, the 332-residue chain is Transaldolase (332 aa).

Lysine 135 acts as the Schiff-base intermediate with substrate in catalysis.

Belongs to the transaldolase family. Type 1 subfamily. Homodimer.

Its subcellular location is the cytoplasm. It catalyses the reaction D-sedoheptulose 7-phosphate + D-glyceraldehyde 3-phosphate = D-erythrose 4-phosphate + beta-D-fructose 6-phosphate. Its pathway is carbohydrate degradation; pentose phosphate pathway; D-glyceraldehyde 3-phosphate and beta-D-fructose 6-phosphate from D-ribose 5-phosphate and D-xylulose 5-phosphate (non-oxidative stage): step 2/3. Its function is as follows. Transaldolase is important for the balance of metabolites in the pentose-phosphate pathway. This chain is Transaldolase, found in Prochlorococcus marinus (strain NATL1A).